Consider the following 135-residue polypeptide: MKFAVAVIFTLALAMGVQSSVIPLLSQVAGHGLSYTAVSGPAVVASPWAVPAAHWPAAVNVASWPPAAIHAAAPAVLAAPAPAVVAAHAPSVVVAPVAHSGVYTAQTRGAIHTAPLAGHIQSVASINAAPAPGTL.

An N-terminal signal peptide occupies residues 1–19 (MKFAVAVIFTLALAMGVQS). 3 repeat units span residues 72–75 (AAPA), 78–81 (AAPA), and 128–131 (AAPA).

Detected in the epidermis underlying the head and thorax (including legs and wings), but not in the abdominal epidermis of newly eclosed flies.

In terms of biological role, component of the cuticle of the adult fruit fly. Could be involved in thickening of the hard adult cuticle. The sequence is that of Adult cuticle protein 1 (Acp1) from Drosophila melanogaster (Fruit fly).